Consider the following 398-residue polypeptide: Glycosyltransferase GlyF (398 aa).

The GT8 domain stretch occupies residues 1 to 259; sequence MRKSIVLAAD…SEIAFQRSDL (259 aa). UDP contacts are provided by residues 8–13 and 101–102; these read AADNAY and DS. D101, D103, and H221 together coordinate Mn(2+). 221–227 contacts UDP; it reads HYASHDK.

This sequence in the N-terminal section; belongs to the glycosyltransferase 8 family.

Functionally, may be involved in the polymorphic O-glycosylation of the serine-rich repeat protein PsrP. Has hydrolytic activity against UDP-galactose and to a lesser extent against UDP-glucose; no glycosyltransferase activity has been seen with tested substrates. The protein is Glycosyltransferase GlyF of Streptococcus pneumoniae serotype 4 (strain ATCC BAA-334 / TIGR4).